The sequence spans 827 residues: Villin-1 (827 aa).

Residues 1-126 (MTKLSAQVKG…IRKGGVASGM (126 aa)) form a necessary for homodimerization region. The tract at residues 1–734 (MTKLSAQVKG…YEDLKAELGN (734 aa)) is core. The Gelsolin-like 1 repeat unit spans residues 27–76 (MQMVPVPSNSFGSFFDGDCYVIQAIHKTGSNLSYDIHYWIGQASSQDEQG). 2 LPA/PIP2-binding site regions span residues 112–119 (KKGIVIRK) and 138–146 (RLLHVKGKR). Gelsolin-like repeat units follow at residues 148–188 (VVAG…MERL) and 265–309 (VVVR…QEKK). Residue serine 366 is modified to Phosphoserine. 3 Gelsolin-like repeats span residues 407 to 457 (NLEL…DEIT), 528 to 568 (TKAF…DERE), and 631 to 672 (FLAT…DEKK). Serine 735 is modified (phosphoserine). The tract at residues 735-827 (SGDWSQITAE…QNLKKEKGLF (93 aa)) is headpiece. Residues 761–827 (SGPLPIFPLE…QNLKKEKGLF (67 aa)) enclose the HP domain. Residues 816 to 824 (KQQNLKKEK) form an LPA/PIP2-binding site 3 region.

Belongs to the villin/gelsolin family. In terms of assembly, monomer. Homodimer; homodimerization is necessary for actin-bundling. Associates with F-actin; phosphorylation at tyrosine residues decreases the association with F-actin. Interacts (phosphorylated at C-terminus tyrosine phosphorylation sites) with PLCG1 (via the SH2 domains). Interacts (phosphorylated form) with PLCG1; the interaction is enhanced by hepatocyte growth factor (HGF). Phosphorylated on tyrosine residues by SRC. The unphosphorylated form increases the initial rate of actin-nucleating activity, whereas the tyrosine-phosphorylated form inhibits actin-nucleating activity, enhances actin-bundling activity and enhances actin-severing activity by reducing high Ca(2+) requirements. The tyrosine-phosphorylated form does not regulate actin-capping activity. Tyrosine phosphorylation is essential for cell migration: tyrosine phosphorylation sites in the N-terminus half regulate actin reorganization and cell morphology, whereas tyrosine phosphorylation sites in the C-terminus half regulate cell migration via interaction with PLCG1. Tyrosine phosphorylation is induced by epidermal growth factor (EGF) and stimulates cell migration.

It localises to the cytoplasm. Its subcellular location is the cytoskeleton. The protein localises to the cell projection. It is found in the lamellipodium. The protein resides in the ruffle. It localises to the microvillus. Its subcellular location is the filopodium tip. The protein localises to the filopodium. Functionally, epithelial cell-specific Ca(2+)-regulated actin-modifying protein that modulates the reorganization of microvillar actin filaments. Plays a role in the actin nucleation, actin filament bundle assembly, actin filament capping and severing. Binds phosphatidylinositol 4,5-bisphosphate (PIP2) and lysophosphatidic acid (LPA); binds LPA with higher affinity than PIP2. Binding to LPA increases its phosphorylation by SRC and inhibits all actin-modifying activities. Binding to PIP2 inhibits actin-capping and -severing activities but enhances actin-bundling activity. Regulates the intestinal epithelial cell morphology, cell invasion, cell migration and apoptosis. Protects against apoptosis induced by dextran sodium sulfate (DSS) in the gastrointestinal epithelium. Appears to regulate cell death by maintaining mitochondrial integrity. Enhances hepatocyte growth factor (HGF)-induced epithelial cell motility, chemotaxis and wound repair. The protein is Villin-1 (VIL1) of Bos taurus (Bovine).